A 179-amino-acid chain; its full sequence is UPF0200 protein TV0279 (179 aa).

6-13 (GMPGAGKD) is an ATP binding site.

Belongs to the UPF0200 family.

This Thermoplasma volcanium (strain ATCC 51530 / DSM 4299 / JCM 9571 / NBRC 15438 / GSS1) protein is UPF0200 protein TV0279.